The sequence spans 434 residues: UDP-N-acetylmuramate--L-alanine ligase (434 aa).

110 to 116 (GAHGKTS) is an ATP binding site.

Belongs to the MurCDEF family.

The protein localises to the cytoplasm. It catalyses the reaction UDP-N-acetyl-alpha-D-muramate + L-alanine + ATP = UDP-N-acetyl-alpha-D-muramoyl-L-alanine + ADP + phosphate + H(+). It participates in cell wall biogenesis; peptidoglycan biosynthesis. Its function is as follows. Cell wall formation. The sequence is that of UDP-N-acetylmuramate--L-alanine ligase from Limosilactobacillus reuteri (strain DSM 20016) (Lactobacillus reuteri).